The following is a 266-amino-acid chain: U2 small nuclear ribonucleoprotein A' (266 aa).

LRR repeat units lie at residues 30–51 (ILRNLGLEGDDIAMPASLNHLA), 53–74 (PTHILDLTNNDLVFFPDLHHRD), 75–95 (DIETLLLSKNRLMVLDAALLP), and 97–118 (KLKSLSLAFNGIENFETLIPLS). The LRRCT domain occupies 132-170 (NPICHLSEYRQRILALVPSLEVLDFKLVSQAEKAQAVKD).

The protein belongs to the U2 small nuclear ribonucleoprotein A family. As to quaternary structure, associated with the spliceosome.

The protein resides in the nucleus. Functionally, involved in pre-mRNA splicing. The chain is U2 small nuclear ribonucleoprotein A' (LEA1) from Candida glabrata (strain ATCC 2001 / BCRC 20586 / JCM 3761 / NBRC 0622 / NRRL Y-65 / CBS 138) (Yeast).